Reading from the N-terminus, the 318-residue chain is Cell surface sensor SHO1 (318 aa).

The segment at 1 to 23 (MPSYGSLHSPSLRKMEHSRGQYG) is disordered. The Cytoplasmic segment spans residues 1 to 38 (MPSYGSLHSPSLRKMEHSRGQYGGGRKGMSLGNVIGDP). Residues 39-59 (FALATISIAGLAWLIAFIASI) traverse the membrane as a helical segment. Residues 60-71 (VAQIQTTQGFPT) are Extracellular-facing. Residues 72–92 (YTWWTVVFYFFLIPGVFVVVA) form a helical membrane-spanning segment. At 93 to 100 (SDTIQTYH) the chain is on the cytoplasmic side. Residues 101-121 (VALVGYMACGLVLTTSSVNGL) traverse the membrane as a helical segment. Topologically, residues 122–130 (VYSTNGAKE) are extracellular. A helical transmembrane segment spans residues 131 to 151 (AAAAGFILLSMVTIVWIFYFG). Residues 152–318 (SAPSAMPRAY…IAPSNYLILL (167 aa)) lie on the Cytoplasmic side of the membrane. The disordered stretch occupies residues 172 to 255 (TSNNRQTMTG…AGGAADAEIV (84 aa)). Positions 190–214 (ETSTSVQPPQMYTSAQLNGFENPSP) are enriched in polar residues. Low complexity predominate over residues 237–250 (GLPKTTTPPAGGAA). An SH3 domain is found at 259-318 (EYPYRAKAIYTYEANPDDANEISFSKHEILEVSDVSGRWWQARKETGETGIAPSNYLILL).

Belongs to the SHO1 family. Forms homooligomers.

It localises to the cell membrane. Its function is as follows. MSB2 and SHO1 have overlapping functions in recognizing various surface signals for MAPK PMK1 activation and appressorium formation. While MSB2 is critical for sensing surface hydrophobicity and cutin monomers, SHO1 may play a more important role in recognizing rice leaf waxes. This is Cell surface sensor SHO1 from Pyricularia oryzae (strain 70-15 / ATCC MYA-4617 / FGSC 8958) (Rice blast fungus).